The following is a 142-amino-acid chain: Hemoglobin subunit zeta (142 aa).

An N-acetylserine modification is found at S2. The 141-residue stretch at 2-142 (SLTKAERTMV…VSSVLTEKYR (141 aa)) folds into the Globin domain. A Phosphoserine modification is found at S53. Residue H59 participates in heme b binding. S73 carries the post-translational modification Phosphoserine. Residue H88 participates in heme b binding.

Belongs to the globin family. Heterotetramer of two zeta chains and beta-type chains.

In terms of biological role, the zeta chain is an alpha-type chain of mammalian embryonic hemoglobin. The protein is Hemoglobin subunit zeta (HBZ1) of Equus caballus (Horse).